Here is a 200-residue protein sequence, read N- to C-terminus: 3-isopropylmalate dehydratase small subunit (200 aa).

Belongs to the LeuD family. LeuD type 1 subfamily. In terms of assembly, heterodimer of LeuC and LeuD.

It catalyses the reaction (2R,3S)-3-isopropylmalate = (2S)-2-isopropylmalate. Its pathway is amino-acid biosynthesis; L-leucine biosynthesis; L-leucine from 3-methyl-2-oxobutanoate: step 2/4. Its function is as follows. Catalyzes the isomerization between 2-isopropylmalate and 3-isopropylmalate, via the formation of 2-isopropylmaleate. The sequence is that of 3-isopropylmalate dehydratase small subunit from Campylobacter jejuni subsp. doylei (strain ATCC BAA-1458 / RM4099 / 269.97).